We begin with the raw amino-acid sequence, 688 residues long: Methionine--tRNA ligase (688 aa).

The 'HIGH' region signature appears at 15 to 25 (PYANGPIHLGH). Zn(2+)-binding residues include Cys146, Cys149, Cys159, and Cys162. The 'KMSKS' region signature appears at 332 to 336 (KMSKS). Residue Lys335 participates in ATP binding. Residues 552-576 (AEAPKKADSKKATDTPVDTRPPLES) are disordered. Residues 554–564 (APKKADSKKAT) show a composition bias toward basic and acidic residues. The 102-residue stretch at 587–688 (DFAKIDLRIA…EGAQPGMRVK (102 aa)) folds into the tRNA-binding domain.

It belongs to the class-I aminoacyl-tRNA synthetase family. MetG type 1 subfamily. As to quaternary structure, homodimer. Requires Zn(2+) as cofactor.

Its subcellular location is the cytoplasm. The catalysed reaction is tRNA(Met) + L-methionine + ATP = L-methionyl-tRNA(Met) + AMP + diphosphate. Is required not only for elongation of protein synthesis but also for the initiation of all mRNA translation through initiator tRNA(fMet) aminoacylation. This chain is Methionine--tRNA ligase, found in Shewanella woodyi (strain ATCC 51908 / MS32).